A 261-amino-acid chain; its full sequence is Chanoclavine-I dehydrogenase easD (261 aa).

7 residues coordinate NADP(+): Ile-18, Lys-48, Asp-66, Arg-132, Tyr-166, Lys-170, and Thr-201. Tyr-166 acts as the Proton donor in catalysis. Lys-170 functions as the Lowers pKa of active site Tyr in the catalytic mechanism.

It belongs to the short-chain dehydrogenases/reductases (SDR) family.

The catalysed reaction is chanoclavine-I + NAD(+) = chanoclavine-I aldehyde + NADH + H(+). It participates in alkaloid biosynthesis; ergot alkaloid biosynthesis. Its function is as follows. Chanoclavine-I dehydrogenase; part of the gene cluster that mediates the biosynthesis of fumiclavanine C, a fungal ergot alkaloid. DmaW catalyzes the first step of ergot alkaloid biosynthesis by condensing dimethylallyl diphosphate (DMAP) and tryptophan to form 4-dimethylallyl-L-tryptophan. The second step is catalyzed by the methyltransferase easF that methylates 4-dimethylallyl-L-tryptophan in the presence of S-adenosyl-L-methionine, resulting in the formation of 4-dimethylallyl-L-abrine. The catalase easC and the FAD-dependent oxidoreductase easE then transform 4-dimethylallyl-L-abrine to chanoclavine-I which is further oxidized by EasD in the presence of NAD(+), resulting in the formation of chanoclavine-I aldehyde. EasA reduces chanoclavine-I aldehyde to dihydrochanoclavine-I aldehyde that spontaneously dehydrates to form 6,8-dimethyl-6,7-didehydroergoline. EasG then catalyzes the reduction of 6,8-dimethyl-6,7-didehydroergoline to form festuclavine. Hydrolysis of festuclavine by easM then leads to the formation of fumigaclavine B which is in turn acetylated by easN to fumigaclavine A. Finally, easL catalyzes the conversion of fumigaclavine A into fumigaclavine C by attaching a dimethylallyl moiety to C-2 of the indole nucleus. The sequence is that of Chanoclavine-I dehydrogenase easD from Aspergillus fumigatus (strain ATCC MYA-4609 / CBS 101355 / FGSC A1100 / Af293) (Neosartorya fumigata).